A 729-amino-acid polypeptide reads, in one-letter code: Glycine--tRNA ligase, mitochondrial 1 (729 aa).

Methionine 1 is subject to N-acetylmethionine. Residues 1–28 (MRIFSTFVFHRRQQIFNLRQFQTTTILR) constitute a mitochondrion transit peptide. In terms of domain architecture, WHEP-TRS spans 50–106 (SLSEKSSSVEAQGNAVRALKASRAAKPEIDAAIEQLNKLKLEKSTVEKELQSIISSS). Glutamate 296 contributes to the glycine binding site. ATP contacts are provided by residues 328-330 (RNE) and 339-340 (RV). Glutamate 347 serves as a coordination point for glycine. 454–455 (EC) lines the ATP pocket. Glycine is bound at residue 575–577 (EPS). Arginine 582 is an ATP binding site.

This sequence belongs to the class-II aminoacyl-tRNA synthetase family. Homodimer.

It is found in the mitochondrion. Its subcellular location is the cytoplasm. The protein resides in the cytosol. The enzyme catalyses tRNA(Gly) + glycine + ATP = glycyl-tRNA(Gly) + AMP + diphosphate. It catalyses the reaction 2 ATP + H(+) = P(1),P(4)-bis(5'-adenosyl) tetraphosphate + diphosphate. In terms of biological role, catalyzes the ATP-dependent ligation of glycine to the 3'-end of its cognate tRNA, via the formation of an aminoacyl-adenylate intermediate (Gly-AMP). Also produces diadenosine tetraphosphate (Ap4A), a universal pleiotropic signaling molecule needed for cell regulation pathways, by direct condensation of 2 ATPs. Thereby, may play a special role in Ap4A homeostasis. The chain is Glycine--tRNA ligase, mitochondrial 1 from Arabidopsis thaliana (Mouse-ear cress).